Here is a 1414-residue protein sequence, read N- to C-terminus: DNA-directed RNA polymerase subunit beta' (1414 aa).

C70, C72, C85, and C88 together coordinate Zn(2+). The Mg(2+) site is built by D461, D463, and D465. Positions 820, 894, 901, and 904 each coordinate Zn(2+).

Belongs to the RNA polymerase beta' chain family. In terms of assembly, the RNAP catalytic core consists of 2 alpha, 1 beta, 1 beta' and 1 omega subunit. When a sigma factor is associated with the core the holoenzyme is formed, which can initiate transcription. It depends on Mg(2+) as a cofactor. Zn(2+) is required as a cofactor.

The catalysed reaction is RNA(n) + a ribonucleoside 5'-triphosphate = RNA(n+1) + diphosphate. In terms of biological role, DNA-dependent RNA polymerase catalyzes the transcription of DNA into RNA using the four ribonucleoside triphosphates as substrates. This Cupriavidus taiwanensis (strain DSM 17343 / BCRC 17206 / CCUG 44338 / CIP 107171 / LMG 19424 / R1) (Ralstonia taiwanensis (strain LMG 19424)) protein is DNA-directed RNA polymerase subunit beta'.